Here is a 66-residue protein sequence, read N- to C-terminus: Photosystem II reaction center protein H (66 aa).

Residues 29–49 traverse the membrane as a helical segment; sequence PIMGLTMVLFLVFLLIILQIY.

This sequence belongs to the PsbH family. As to quaternary structure, PSII is composed of 1 copy each of membrane proteins PsbA, PsbB, PsbC, PsbD, PsbE, PsbF, PsbH, PsbI, PsbJ, PsbK, PsbL, PsbM, PsbT, PsbX, PsbY, PsbZ, Psb30/Ycf12, at least 3 peripheral proteins of the oxygen-evolving complex and a large number of cofactors. It forms dimeric complexes.

Its subcellular location is the plastid. The protein resides in the chloroplast thylakoid membrane. In terms of biological role, one of the components of the core complex of photosystem II (PSII), required for its stability and/or assembly. PSII is a light-driven water:plastoquinone oxidoreductase that uses light energy to abstract electrons from H(2)O, generating O(2) and a proton gradient subsequently used for ATP formation. It consists of a core antenna complex that captures photons, and an electron transfer chain that converts photonic excitation into a charge separation. The polypeptide is Photosystem II reaction center protein H (Thalassiosira pseudonana (Marine diatom)).